A 465-amino-acid polypeptide reads, in one-letter code: Fumarate hydratase class II (465 aa).

Residues 98–100 (SGT), Arg-126, 129–132 (HPND), 139–141 (SSN), and Thr-187 contribute to the substrate site. His-188 serves as the catalytic Proton donor/acceptor. Residue Ser-318 is part of the active site. Residues Ser-319 and 324-326 (KVN) each bind substrate.

The protein belongs to the class-II fumarase/aspartase family. Fumarase subfamily. As to quaternary structure, homotetramer.

The protein localises to the cytoplasm. The catalysed reaction is (S)-malate = fumarate + H2O. The protein operates within carbohydrate metabolism; tricarboxylic acid cycle; (S)-malate from fumarate: step 1/1. Functionally, involved in the TCA cycle. Catalyzes the stereospecific interconversion of fumarate to L-malate. The sequence is that of Fumarate hydratase class II from Yersinia pestis.